Here is a 195-residue protein sequence, read N- to C-terminus: COMM domain-containing protein 3 (195 aa).

In terms of domain architecture, COMM spans 124–193; it reads HITDVSWRLE…DASKSLERAT (70 aa).

The protein belongs to the COMM domain-containing protein 3 family. Component of the commander complex consisting of the CCC subcomplex and the retriever subcomplex. Component of the CCC (COMMD/CCDC22/CCDC93) subcomplex consisting of COMMD1, COMMD2, COMMD3, COMMD4, COMMD5, COMMD6, COMMD7, COMMD8, COMMD9, COMMD10, CCDC22 and CCDC93; within the complex forms a heterodimer with COMMD2. Interacts with NFKB1/p105. Interacts with CCDC22, CCDC93, SCNN1B, CUL3, CUL4A, CUL4B, CUL5. In terms of tissue distribution, expressed in kidney collecting duct cells and in the nuclei of proximal convoluted tubule cells in the kidney cortex (at protein level).

It localises to the cytoplasm. The protein localises to the nucleus. In terms of biological role, scaffold protein in the commander complex that is essential for endosomal recycling of transmembrane cargos; the commander complex is composed of the CCC subcomplex and the retriever subcomplex. May modulate activity of cullin-RING E3 ubiquitin ligase (CRL) complexes. May down-regulate activation of NF-kappa-B. Modulates Na(+) transport in epithelial cells by regulation of apical cell surface expression of amiloride-sensitive sodium channel (ENaC) subunits. This Rattus norvegicus (Rat) protein is COMM domain-containing protein 3 (Commd3).